Consider the following 3503-residue polypeptide: Protein dachsous (3503 aa).

An N-terminal signal peptide occupies residues 1-20; the sequence is MLRSSLLILLAIVLLGSSQA. The Extracellular portion of the chain corresponds to 21 to 3045; it reads ASHDQERERK…SSSGSIGDWA (3025 aa). Cadherin domains follow at residues 22–121, 122–233, 234–340, 345–451, 452–558, 559–662, 663–774, 775–878, 879–983, 984–1100, 1101–1203, 1205–1312, 1313–1432, and 1433–1549; these read SHDQ…APTF, PQTS…QPIF, NQSR…QPTI, LSDD…PPEF, EQDL…EPIF, DQSF…RPVF, YPRE…PPIF, EKAR…APEF, EASM…PPVF, EKDE…DPKF, QKSK…APEI, DPQE…RPTF, TSSS…APEW, and PQDP…APHF. N-linked (GlcNAc...) asparagine glycans are attached at residues asparagine 220 and asparagine 234. Residue serine 236 is modified to Phosphoserine. Residues asparagine 245, asparagine 381, and asparagine 416 are each glycosylated (N-linked (GlcNAc...) asparagine). Residues asparagine 564, asparagine 594, and asparagine 743 are each glycosylated (N-linked (GlcNAc...) asparagine). 6 N-linked (GlcNAc...) asparagine glycosylation sites follow: asparagine 966, asparagine 991, asparagine 1006, asparagine 1029, asparagine 1143, and asparagine 1236. Residues asparagine 1453, asparagine 1479, asparagine 1524, and asparagine 1553 are each glycosylated (N-linked (GlcNAc...) asparagine). Cadherin domains lie at 1556–1666, 1667–1794, 1796–1899, 1900–2004, 2005–2111, 2114–2269, 2270–2375, 2375–2479, 2489–2595, 2596–2699, 2701–2809, 2810–2916, and 2919–3028; these read GGKT…PPRF, LQAV…SPEF, PGSC…APRF, KLSK…RPIF, ERYP…TPVL, QNET…SPKF, SQKQ…QPTF, FPPN…APVF, AILP…RSQF, LQNQ…FPIF, RSAK…EPKF, PLTE…TPQF, and RTYR…HPGT. Asparagine 1700, asparagine 1884, and asparagine 1940 each carry an N-linked (GlcNAc...) asparagine glycan. Asparagine 2115 carries an N-linked (GlcNAc...) asparagine glycan. The interval 2193–2225 is disordered; that stretch reads GRALHYEEEIDESSEEDPNNSTRSQRALTSSSF. Residues 2200 to 2210 are compositionally biased toward acidic residues; it reads EEIDESSEEDP. Residues asparagine 2211 and asparagine 2212 are each glycosylated (N-linked (GlcNAc...) asparagine). Polar residues predominate over residues 2211–2225; the sequence is NNSTRSQRALTSSSF. N-linked (GlcNAc...) asparagine glycans are attached at residues asparagine 2421, asparagine 2511, asparagine 2520, asparagine 2547, asparagine 2588, and asparagine 2678. Residues asparagine 2845 and asparagine 2967 are each glycosylated (N-linked (GlcNAc...) asparagine). Residues 3046 to 3066 traverse the membrane as a helical segment; it reads IGLLVAFLLVLCAAAGIFLFI. The Cytoplasmic segment spans residues 3067 to 3503; that stretch reads HMRSRKPRNA…SQRGNVGTRM (437 aa). Disordered stretches follow at residues 3114–3195, 3360–3404, and 3431–3503; these read AGAA…GRIS, LSEH…IPPP, and LPRS…GTRM. 2 stretches are compositionally biased toward low complexity: residues 3133-3159 and 3363-3372; these read GAHA…SGRG and HSGSGASSSA. Over residues 3391–3404 the composition is skewed to pro residues; the sequence is KPPPSAPPTHIPPP. Residues 3440–3463 are compositionally biased toward low complexity; that stretch reads ASGSFSTSSAMSPSFSPSLSPLAT. Phosphoserine is present on residues serine 3465 and serine 3469. A compositionally biased stretch (polar residues) spans 3492 to 3503; it reads QPSQRGNVGTRM.

As to quaternary structure, interacts (via cytoplasmic region) with Myo31DF. Post-translationally, phosphorylated by fj on Ser/Thr of cadherin domains. Expressed in embryonic ectoderm. In larvae, expression is restricted to imaginal disks and brain.

The protein resides in the cell membrane. It localises to the cell junction. In terms of biological role, required for normal morphogenesis of adult structures derived from imaginal disks. Plays a role in planar cell polarity and in determining body left-right asymmetry. Expression in segment H1 of the imaginal ring and interaction with Myo31DF are required to induce changes of cell shape and orientation in segment H2, which then gives rise to normal, dextral looping of the adult hindgut. This chain is Protein dachsous (ds), found in Drosophila melanogaster (Fruit fly).